Consider the following 162-residue polypeptide: Regulatory protein RecX (162 aa).

This sequence belongs to the RecX family.

The protein resides in the cytoplasm. Functionally, modulates RecA activity. The protein is Regulatory protein RecX of Xanthomonas campestris pv. campestris (strain 8004).